Reading from the N-terminus, the 183-residue chain is A-type ATP synthase subunit E (183 aa).

This sequence belongs to the V-ATPase E subunit family. As to quaternary structure, has multiple subunits with at least A(3), B(3), C, D, E, F, H, I and proteolipid K(x).

It localises to the cell membrane. In terms of biological role, component of the A-type ATP synthase that produces ATP from ADP in the presence of a proton gradient across the membrane. This is A-type ATP synthase subunit E from Methanosarcina barkeri (strain Fusaro / DSM 804).